Here is a 121-residue protein sequence, read N- to C-terminus: RxLR effector protein PexRD2 (121 aa).

Residues 1-20 form the signal peptide; sequence MRLSYVIVVIATSFLVTTEA. The short motif at 38–56 is the RxLR-dEER element; the sequence is RLLRKHYTAAENDDDSEAR. A WY domain region spans residues 57 to 121; that stretch reads ALNTEKMKTM…LNYVAEHTAV (65 aa).

The protein belongs to the RxLR effector family. As to quaternary structure, homodimer. Interacts with host MAPKKK epsilon (via its kinase domain).

It is found in the secreted. It localises to the host cytoplasm. The protein resides in the host nucleus. Its function is as follows. Effector that enhances P.infestans colonization of Nicotiana benthamiana leaves. Induces a weak Cell death response in N.benthamiana. PexRD2-induced cell death is dependent on SGT1, suggesting that PexRD2 is recognized by the plant immune system. Interacts with the kinase domain of the host MAPKKK epsilon, a positive regulator of cell death associated with plant immunity, and perturbs signaling pathways triggered by MAPKKK epsilon. This is RxLR effector protein PexRD2 from Phytophthora infestans (strain T30-4) (Potato late blight agent).